A 250-amino-acid polypeptide reads, in one-letter code: DNA polymerase sliding clamp (250 aa).

It belongs to the PCNA family. As to quaternary structure, homotrimer. The subunits circularize to form a toroid; DNA passes through its center. Replication factor C (RFC) is required to load the toroid on the DNA.

Its function is as follows. Sliding clamp subunit that acts as a moving platform for DNA processing. Responsible for tethering the catalytic subunit of DNA polymerase and other proteins to DNA during high-speed replication. The protein is DNA polymerase sliding clamp of Methanococcus maripaludis (strain DSM 14266 / JCM 13030 / NBRC 101832 / S2 / LL).